The following is a 284-amino-acid chain: Pseudouridine-5'-phosphate glycosidase (284 aa).

Residue E17 is the Proton donor of the active site. Positions 77 and 97 each coordinate substrate. Residue D126 participates in Mn(2+) binding. Residue 128–130 (SQD) coordinates substrate. K147 serves as the catalytic Nucleophile.

The protein belongs to the pseudouridine-5'-phosphate glycosidase family. In terms of assembly, homotrimer. It depends on Mn(2+) as a cofactor.

It carries out the reaction D-ribose 5-phosphate + uracil = psi-UMP + H2O. Catalyzes the reversible cleavage of pseudouridine 5'-phosphate (PsiMP) to ribose 5-phosphate and uracil. Functions biologically in the cleavage direction, as part of a pseudouridine degradation pathway. The polypeptide is Pseudouridine-5'-phosphate glycosidase (Thermotoga petrophila (strain ATCC BAA-488 / DSM 13995 / JCM 10881 / RKU-1)).